The sequence spans 69 residues: Neurotoxin Cex5 (69 aa).

Residue A1 is a signal peptide. In terms of domain architecture, LCN-type CS-alpha/beta spans 2-67 (KDGYLVSKST…TYPIPGKSCG (66 aa)). 4 disulfide bridges follow: C13–C66, C17–C42, C26–C47, and C30–C49. C66 is subject to Cysteine amide. Positions 67 to 69 (GKK) are excised as a propeptide.

Belongs to the long (4 C-C) scorpion toxin superfamily. Sodium channel inhibitor family. Beta subfamily. As to expression, expressed by the venom gland.

It localises to the secreted. In terms of biological role, beta toxins bind voltage-independently at site-4 of sodium channels (Nav) and shift the voltage of activation toward more negative potentials thereby affecting sodium channel activation and promoting spontaneous and repetitive firing. The polypeptide is Neurotoxin Cex5 (Centruroides exilicauda (Bark scorpion)).